Here is a 214-residue protein sequence, read N- to C-terminus: Ribonuclease T (214 aa).

The Exonuclease domain maps to 20–195 (VVVDVETAGF…YDTQQTAELF (176 aa)). Mg(2+) is bound by residues aspartate 23, glutamate 25, histidine 182, and aspartate 187. The active-site Proton donor/acceptor is histidine 182.

It belongs to the RNase T family. In terms of assembly, homodimer. Requires Mg(2+) as cofactor.

Trims short 3' overhangs of a variety of RNA species, leaving a one or two nucleotide 3' overhang. Responsible for the end-turnover of tRNA: specifically removes the terminal AMP residue from uncharged tRNA (tRNA-C-C-A). Also appears to be involved in tRNA biosynthesis. The protein is Ribonuclease T of Vibrio campbellii (strain ATCC BAA-1116).